A 251-amino-acid polypeptide reads, in one-letter code: Large ribosomal subunit protein uL16m (251 aa).

Residues 1–29 constitute a mitochondrion transit peptide; the sequence is MWRLLTRAPAPLWRMHFSDTWAALPTSAG.

Belongs to the universal ribosomal protein uL16 family. Component of the mitochondrial ribosome large subunit (39S) which comprises a 16S rRNA and about 50 distinct proteins.

The protein localises to the mitochondrion. The chain is Large ribosomal subunit protein uL16m (Mrpl16) from Rattus norvegicus (Rat).